Reading from the N-terminus, the 189-residue chain is dCTP deaminase, dUMP-forming (189 aa).

Residues 101-106 (KSSLGR), Asp119, 127-129 (TLE), Gln148, Tyr162, and Gln174 contribute to the dCTP site. Glu129 acts as the Proton donor/acceptor in catalysis.

The protein belongs to the dCTP deaminase family. Homotrimer.

It catalyses the reaction dCTP + 2 H2O = dUMP + NH4(+) + diphosphate. The protein operates within pyrimidine metabolism; dUMP biosynthesis; dUMP from dCTP: step 1/1. In terms of biological role, bifunctional enzyme that catalyzes both the deamination of dCTP to dUTP and the hydrolysis of dUTP to dUMP without releasing the toxic dUTP intermediate. In Rhodococcus opacus (strain B4), this protein is dCTP deaminase, dUMP-forming.